Reading from the N-terminus, the 246-residue chain is Dof zinc finger protein DOF4.7 (246 aa).

2 stretches are compositionally biased toward polar residues: residues 1–12 (MMTSSHQSNTTG) and 27–37 (QINNKEPSPAT). Residues 1 to 39 (MMTSSHQSNTTGFKPRRIKTTAKPPRQINNKEPSPATQP) are disordered. The Dof-type zinc-finger motif lies at 41–95 (LKCPRCDSVNTKFCYYNNYSLSQPRHYCKNCRRYWTRGGALRNVPIGGSTRNKNK). Residues C43, C46, C68, and C71 each contribute to the Zn(2+) site. Residues 216–235 (GGATSGNHEDNDDGEGNLGN) are disordered.

In terms of assembly, interacts with ZFP2. In terms of tissue distribution, highly expressed at the base of all organs of the flower, especially in the abscission zone (AZ) of petals, stamens and sepals. Expressed at low levels in sepals, filaments, stigmatic papillae, tips of young siliques, and at the base of pedicels and leaf trichomes.

Its subcellular location is the nucleus. Its function is as follows. Transcription factor that binds specifically to a 5'-AA[AG]G-3' consensus core sequence. Involved in the negative regulation of floral organ abscission by binding to the typical DOF 5'-AAAG-3' sequences in the promoter of ADPG2/PGAZAT, and by down-regulating its expression. ADPG2/PGAZAT is an abscission-related and cell wall hydrolyzing polygalacturonase. May act through the interaction with ZFP2, an abscission-related transcription factor. The polypeptide is Dof zinc finger protein DOF4.7 (Arabidopsis thaliana (Mouse-ear cress)).